The primary structure comprises 518 residues: Bifunctional purine biosynthesis protein PurH (518 aa).

Positions 1 to 144 constitute an MGS-like domain; sequence MNRRAVLSVS…KNQERVSIVV (144 aa).

The protein belongs to the PurH family.

The enzyme catalyses (6R)-10-formyltetrahydrofolate + 5-amino-1-(5-phospho-beta-D-ribosyl)imidazole-4-carboxamide = 5-formamido-1-(5-phospho-D-ribosyl)imidazole-4-carboxamide + (6S)-5,6,7,8-tetrahydrofolate. It carries out the reaction IMP + H2O = 5-formamido-1-(5-phospho-D-ribosyl)imidazole-4-carboxamide. It functions in the pathway purine metabolism; IMP biosynthesis via de novo pathway; 5-formamido-1-(5-phospho-D-ribosyl)imidazole-4-carboxamide from 5-amino-1-(5-phospho-D-ribosyl)imidazole-4-carboxamide (10-formyl THF route): step 1/1. Its pathway is purine metabolism; IMP biosynthesis via de novo pathway; IMP from 5-formamido-1-(5-phospho-D-ribosyl)imidazole-4-carboxamide: step 1/1. This chain is Bifunctional purine biosynthesis protein PurH, found in Desulfitobacterium hafniense (strain DSM 10664 / DCB-2).